A 110-amino-acid chain; its full sequence is PTS system oligo-beta-mannoside-specific EIIA component (110 aa).

The 99-residue stretch at 9–107 (LTDEQISFQL…VKEMLDLFKT (99 aa)) folds into the PTS EIIA type-3 domain. Catalysis depends on H83, which acts as the Tele-phosphohistidine intermediate. H83 is subject to Phosphohistidine; by HPr.

The protein localises to the cytoplasm. The phosphoenolpyruvate-dependent sugar phosphotransferase system (sugar PTS), a major carbohydrate active transport system, catalyzes the phosphorylation of incoming sugar substrates concomitantly with their translocation across the cell membrane. The enzyme II GmuABC PTS system is involved in the transport of oligo-glucomannans such as cellobiose or mannobiose. This Bacillus subtilis (strain 168) protein is PTS system oligo-beta-mannoside-specific EIIA component.